A 177-amino-acid polypeptide reads, in one-letter code: Adenine phosphoribosyltransferase (177 aa).

The protein belongs to the purine/pyrimidine phosphoribosyltransferase family. In terms of assembly, homodimer.

It localises to the cytoplasm. It carries out the reaction AMP + diphosphate = 5-phospho-alpha-D-ribose 1-diphosphate + adenine. It participates in purine metabolism; AMP biosynthesis via salvage pathway; AMP from adenine: step 1/1. In terms of biological role, catalyzes a salvage reaction resulting in the formation of AMP, that is energically less costly than de novo synthesis. The sequence is that of Adenine phosphoribosyltransferase from Pelodictyon phaeoclathratiforme (strain DSM 5477 / BU-1).